The primary structure comprises 128 residues: Fruiting body differentiation protein 16 (128 aa).

The N-terminal stretch at 1–19 is a signal peptide; the sequence is MLFSHIVFVALSVFGLVQA.

Functionally, plays a role in the regulation of fruiting body development. The polypeptide is Fruiting body differentiation protein 16 (Flammulina velutipes (Agaricus velutipes)).